The chain runs to 194 residues: Holliday junction branch migration complex subunit RuvA (194 aa).

Residues 1–64 form a domain I region; the sequence is MIGRITGLLL…EDVHLLFGFM (64 aa). Positions 65–140 are domain II; sequence TEQERALFRQ…KIDPVAILSE (76 aa). The segment at 140-143 is flexible linker; sequence EAGA. The tract at residues 144–194 is domain III; the sequence is AASNVDKDILSALLALGYNGREVNRALEQLSEGVTVSDGIMQSLKFLSKVK.

It belongs to the RuvA family. Homotetramer. Forms an RuvA(8)-RuvB(12)-Holliday junction (HJ) complex. HJ DNA is sandwiched between 2 RuvA tetramers; dsDNA enters through RuvA and exits via RuvB. An RuvB hexamer assembles on each DNA strand where it exits the tetramer. Each RuvB hexamer is contacted by two RuvA subunits (via domain III) on 2 adjacent RuvB subunits; this complex drives branch migration. In the full resolvosome a probable DNA-RuvA(4)-RuvB(12)-RuvC(2) complex forms which resolves the HJ.

The protein resides in the cytoplasm. Its function is as follows. The RuvA-RuvB-RuvC complex processes Holliday junction (HJ) DNA during genetic recombination and DNA repair, while the RuvA-RuvB complex plays an important role in the rescue of blocked DNA replication forks via replication fork reversal (RFR). RuvA specifically binds to HJ cruciform DNA, conferring on it an open structure. The RuvB hexamer acts as an ATP-dependent pump, pulling dsDNA into and through the RuvAB complex. HJ branch migration allows RuvC to scan DNA until it finds its consensus sequence, where it cleaves and resolves the cruciform DNA. The sequence is that of Holliday junction branch migration complex subunit RuvA from Nitrosomonas eutropha (strain DSM 101675 / C91 / Nm57).